The sequence spans 187 residues: PRA1 family protein G1 (187 aa).

A run of 3 helical transmembrane segments spans residues 84–104, 125–145, and 146–166; these read LFLI…AMWL, VIVF…NSLQ, and CLIL…IIRN.

The protein belongs to the PRA1 family. In terms of tissue distribution, expressed in roots and lateral roots.

Its subcellular location is the endosome membrane. In terms of biological role, may be involved in both secretory and endocytic intracellular trafficking in the endosomal/prevacuolar compartments. The sequence is that of PRA1 family protein G1 (PRA1G1) from Arabidopsis thaliana (Mouse-ear cress).